We begin with the raw amino-acid sequence, 356 residues long: GTPase Obg (356 aa).

In terms of domain architecture, Obg spans 1–159 (MKFIDRVKIH…RWLRLELKLL (159 aa)). The OBG-type G domain occupies 160-331 (ADVGLLGMPN…LVAEVARELE (172 aa)). Residues 166–173 (GMPNAGKS), 191–195 (FTTLV), 213–216 (DIPG), 283–286 (SKID), and 312–314 (SAV) contribute to the GTP site. Mg(2+)-binding residues include S173 and T193.

The protein belongs to the TRAFAC class OBG-HflX-like GTPase superfamily. OBG GTPase family. In terms of assembly, monomer. Requires Mg(2+) as cofactor.

The protein resides in the cytoplasm. In terms of biological role, an essential GTPase which binds GTP, GDP and possibly (p)ppGpp with moderate affinity, with high nucleotide exchange rates and a fairly low GTP hydrolysis rate. Plays a role in control of the cell cycle, stress response, ribosome biogenesis and in those bacteria that undergo differentiation, in morphogenesis control. This chain is GTPase Obg, found in Syntrophotalea carbinolica (strain DSM 2380 / NBRC 103641 / GraBd1) (Pelobacter carbinolicus).